The primary structure comprises 283 residues: Galactooligosaccharides transport system permease protein GanQ (283 aa).

A run of 6 helical transmembrane segments spans residues L13–W33, I82–S102, L115–A135, I137–P157, I188–G208, and T248–L268. The ABC transmembrane type-1 domain occupies Y76 to L268.

Belongs to the binding-protein-dependent transport system permease family. As to quaternary structure, the complex is composed of two ATP-binding proteins (MsmX), two transmembrane proteins (GanP and GanQ) and a solute-binding protein (GanS).

The protein resides in the cell membrane. Its function is as follows. Involved in galactan degradation. Part of the ABC transporter complex GanPQS involved in the uptake of galactooligosaccharides. Responsible for the translocation of the substrate across the membrane. The chain is Galactooligosaccharides transport system permease protein GanQ (ganQ) from Bacillus subtilis (strain 168).